The sequence spans 20 residues: Trypsin inhibitor DE-3 (20 aa).

Belongs to the protease inhibitor I3 (leguminous Kunitz-type inhibitor) family.

In terms of biological role, inhibition of trypsin. This chain is Trypsin inhibitor DE-3, found in Erythrina corallodendron (Coral tree).